We begin with the raw amino-acid sequence, 391 residues long: ATP phosphoribosyltransferase regulatory subunit (391 aa).

It belongs to the class-II aminoacyl-tRNA synthetase family. HisZ subfamily. Heteromultimer composed of HisG and HisZ subunits.

Its subcellular location is the cytoplasm. The protein operates within amino-acid biosynthesis; L-histidine biosynthesis; L-histidine from 5-phospho-alpha-D-ribose 1-diphosphate: step 1/9. Required for the first step of histidine biosynthesis. May allow the feedback regulation of ATP phosphoribosyltransferase activity by histidine. This is ATP phosphoribosyltransferase regulatory subunit from Prochlorococcus marinus (strain NATL1A).